We begin with the raw amino-acid sequence, 294 residues long: Early 4 ORF6 protein (294 aa).

The Nuclear localization signal motif lies at alanine 239–glutamate 255.

This sequence belongs to the adenoviridae E4 30 to 34 kDa protein family. As to quaternary structure, interacts with E1B-55k.

The protein resides in the host nucleus. It is found in the host cytoplasm. Functionally, plays a major role to prevent cellular inhibition of viral genome replication by nuclear bodies. Assembles an SCF-like E3 ubiquitin ligase complex based on the cellular proteins ELOB, ELOC, CUL5 and RBX1, in cooperation with viral E1B-55K. This viral RING-type ligase ubiquitinates cellular substrates prior to proteasomal degradation: p53/TP53, LIG4, MRE11-RAD50-NBS1 (MRN) complex, ITGA3, DAXX and BLM. The chain is Early 4 ORF6 protein from Homo sapiens (Human).